Consider the following 301-residue polypeptide: Ribonuclease Z (301 aa).

Positions 60, 62, 64, 65, 137, 207, and 265 each coordinate Zn(2+). D64 serves as the catalytic Proton acceptor.

The protein belongs to the RNase Z family. As to quaternary structure, homodimer. Zn(2+) is required as a cofactor.

The enzyme catalyses Endonucleolytic cleavage of RNA, removing extra 3' nucleotides from tRNA precursor, generating 3' termini of tRNAs. A 3'-hydroxy group is left at the tRNA terminus and a 5'-phosphoryl group is left at the trailer molecule.. Its function is as follows. Zinc phosphodiesterase, which displays some tRNA 3'-processing endonuclease activity. Probably involved in tRNA maturation, by removing a 3'-trailer from precursor tRNA. This chain is Ribonuclease Z, found in Exiguobacterium sibiricum (strain DSM 17290 / CCUG 55495 / CIP 109462 / JCM 13490 / 255-15).